A 179-amino-acid chain; its full sequence is Large ribosomal subunit protein uL6 (179 aa).

This sequence belongs to the universal ribosomal protein uL6 family. As to quaternary structure, part of the 50S ribosomal subunit.

Functionally, this protein binds to the 23S rRNA, and is important in its secondary structure. It is located near the subunit interface in the base of the L7/L12 stalk, and near the tRNA binding site of the peptidyltransferase center. In Synechococcus sp. (strain CC9311), this protein is Large ribosomal subunit protein uL6.